A 594-amino-acid polypeptide reads, in one-letter code: SHC-transforming protein 3 (594 aa).

The segment at 98–147 (GSCSAPSLAAPDGSAPSAPRAPAMSAARKGRPGDEPLPRPPRGAPHASDQ) is disordered. Positions 101–124 (SAPSLAAPDGSAPSAPRAPAMSAA) are enriched in low complexity. The PID domain occupies 149–334 (LGPGVTYVVK…LDEPWTEEEG (186 aa)). The CH1 stretch occupies residues 335-498 (DGSDHPYYNS…KMLEELQAET (164 aa)). Disordered stretches follow at residues 351–373 (PPGG…AQFA) and 386–405 (GDTF…SSDI). Positions 393-405 (WQQTPLRQGSSDI) are enriched in polar residues. S402 carries the phosphoserine modification. An SH2 domain is found at 499-590 (WYQGEMSRKE…GSELCLQQPV (92 aa)).

As to quaternary structure, interacts with the Trk receptors in a phosphotyrosine-dependent manner. Once activated, binds to GRB2. Interacts with activated EGF receptors. In terms of processing, tyrosine phosphorylated. Mainly expressed in brain. Hardly detectable in other tissues, except in pancreas. Highly expressed in the cerebral cortex, frontal and temporal lobes, occipital pole, hippocampus, caudate nucleus and amygdala. Expressed at low level in the cerebellum, medulla and spinal cord.

Signaling adapter that couples activated growth factor receptors to signaling pathway in neurons. Involved in the signal transduction pathways of neurotrophin-activated Trk receptors in cortical neurons. In Homo sapiens (Human), this protein is SHC-transforming protein 3 (SHC3).